Here is a 519-residue protein sequence, read N- to C-terminus: Maturase K (519 aa).

The protein belongs to the intron maturase 2 family. MatK subfamily.

The protein resides in the plastid. The protein localises to the chloroplast. Usually encoded in the trnK tRNA gene intron. Probably assists in splicing its own and other chloroplast group II introns. The chain is Maturase K from Keteleeria davidiana (David's keteleeria).